A 188-amino-acid chain; its full sequence is Phosphoribosylglycinamide formyltransferase (188 aa).

Residue 12–14 participates in N(1)-(5-phospho-beta-D-ribosyl)glycinamide binding; that stretch reads GSN. (6R)-10-formyltetrahydrofolate-binding positions include Lys-66, 91-94, and Asn-108; that span reads MRLI. Catalysis depends on His-110, which acts as the Proton donor.

It belongs to the GART family.

The catalysed reaction is N(1)-(5-phospho-beta-D-ribosyl)glycinamide + (6R)-10-formyltetrahydrofolate = N(2)-formyl-N(1)-(5-phospho-beta-D-ribosyl)glycinamide + (6S)-5,6,7,8-tetrahydrofolate + H(+). It participates in purine metabolism; IMP biosynthesis via de novo pathway; N(2)-formyl-N(1)-(5-phospho-D-ribosyl)glycinamide from N(1)-(5-phospho-D-ribosyl)glycinamide (10-formyl THF route): step 1/1. Its function is as follows. Catalyzes the transfer of a formyl group from 10-formyltetrahydrofolate to 5-phospho-ribosyl-glycinamide (GAR), producing 5-phospho-ribosyl-N-formylglycinamide (FGAR) and tetrahydrofolate. The chain is Phosphoribosylglycinamide formyltransferase from Staphylococcus aureus (strain COL).